We begin with the raw amino-acid sequence, 83 residues long: Cytochrome b559 subunit alpha (83 aa).

A helical transmembrane segment spans residues 21–35; the sequence is VIHSITIPSLFIAGW. His23 provides a ligand contact to heme.

The protein belongs to the PsbE/PsbF family. Heterodimer of an alpha subunit and a beta subunit. PSII is composed of 1 copy each of membrane proteins PsbA, PsbB, PsbC, PsbD, PsbE, PsbF, PsbH, PsbI, PsbJ, PsbK, PsbL, PsbM, PsbT, PsbX, PsbY, PsbZ, Psb30/Ycf12, at least 3 peripheral proteins of the oxygen-evolving complex and a large number of cofactors. It forms dimeric complexes. It depends on heme b as a cofactor.

It is found in the plastid. It localises to the chloroplast thylakoid membrane. In terms of biological role, this b-type cytochrome is tightly associated with the reaction center of photosystem II (PSII). PSII is a light-driven water:plastoquinone oxidoreductase that uses light energy to abstract electrons from H(2)O, generating O(2) and a proton gradient subsequently used for ATP formation. It consists of a core antenna complex that captures photons, and an electron transfer chain that converts photonic excitation into a charge separation. The polypeptide is Cytochrome b559 subunit alpha (Amborella trichopoda).